A 156-amino-acid chain; its full sequence is uncharacterized protein (156 aa).

This is an uncharacterized protein from Schizosaccharomyces pombe (strain 972 / ATCC 24843) (Fission yeast).